The following is a 397-amino-acid chain: Ribosomal RNA large subunit methyltransferase I (397 aa).

Positions 2-80 (AIRIKLKPGR…KEEAIDADFF (79 aa)) constitute a PUA domain.

The protein belongs to the methyltransferase superfamily. RlmI family.

It is found in the cytoplasm. The catalysed reaction is cytidine(1962) in 23S rRNA + S-adenosyl-L-methionine = 5-methylcytidine(1962) in 23S rRNA + S-adenosyl-L-homocysteine + H(+). Its function is as follows. Specifically methylates the cytosine at position 1962 (m5C1962) of 23S rRNA. The sequence is that of Ribosomal RNA large subunit methyltransferase I from Shewanella denitrificans (strain OS217 / ATCC BAA-1090 / DSM 15013).